A 247-amino-acid chain; its full sequence is 3-oxoacyl-[acyl-carrier-protein] reductase MabA (247 aa).

NADP(+) contacts are provided by residues 25–27 (RGI), Arg-47, 61–62 (DV), Gly-90, Tyr-153, Lys-157, Ile-186, and Arg-197. The active-site Proton acceptor is the Tyr-153.

It belongs to the short-chain dehydrogenases/reductases (SDR) family. As to quaternary structure, homotetramer.

It localises to the secreted. It is found in the cell wall. It carries out the reaction a (3R)-hydroxyacyl-[ACP] + NADP(+) = a 3-oxoacyl-[ACP] + NADPH + H(+). It functions in the pathway lipid metabolism; mycolic acid biosynthesis. Functionally, part of the mycobacterial fatty acid elongation system FAS-II, which is involved in mycolic acid biosynthesis. Catalyzes the NADPH-dependent reduction of beta-ketoacyl derivatives, the second step of the FAS-II elongation cycle. The polypeptide is 3-oxoacyl-[acyl-carrier-protein] reductase MabA (Mycobacterium bovis (strain ATCC BAA-935 / AF2122/97)).